Reading from the N-terminus, the 263-residue chain is Mediator of RNA polymerase II transcription subunit 4 (263 aa).

Positions 61–111 (LQLAAEQAGIEKNMDALREQVRKQDEEINQLQRQLKEAEQILATSIFQARQ) form a coiled coil. 2 disordered regions span residues 209 to 228 (APNQ…MGAG) and 235 to 263 (DTRA…SDSQ). Positions 251–263 (STESSSSSSSDSQ) are enriched in low complexity.

It belongs to the Mediator complex subunit 4 family. In terms of assembly, component of the Mediator complex.

The protein resides in the nucleus. In terms of biological role, component of the Mediator complex, a coactivator involved in the regulated transcription of nearly all RNA polymerase II-dependent genes. Mediator functions as a bridge to convey information from gene-specific regulatory proteins to the basal RNA polymerase II transcription machinery. Mediator is recruited to promoters by direct interactions with regulatory proteins and serves as a scaffold for the assembly of a functional preinitiation complex with RNA polymerase II and the general transcription factors. The sequence is that of Mediator of RNA polymerase II transcription subunit 4 (MED4) from Anopheles gambiae (African malaria mosquito).